Consider the following 269-residue polypeptide: Gem-associated protein 2 (269 aa).

A phosphoserine mark is found at Ser-70 and Ser-155.

The protein belongs to the gemin-2 family. Monomer. Part of the core SMN complex that contains SMN1, GEMIN2/SIP1, DDX20/GEMIN3, GEMIN4, GEMIN5, GEMIN6, GEMIN7, GEMIN8 and STRAP/UNRIP. Part of the SMN-Sm complex that contains SMN1, GEMIN2/SIP1, DDX20/GEMIN3, GEMIN4, GEMIN5, GEMIN6, GEMIN7, GEMIN8, STRAP/UNRIP and the Sm proteins SNRPB, SNRPD1, SNRPD2, SNRPD3, SNRPE, SNRPF and SNRPG. Interacts with GEMIN5; the interaction is direct. Interacts (via C-terminus) with SMN1; the interaction is direct. Interacts with SNRPD1; the interaction is direct. Interacts with SNRPD2; the interaction is direct. Interacts (via N-terminus) with SNRPF; the interaction is direct. Interacts (via N-terminus) with SNRPE; the interaction is direct. Interacts (via N-terminus) with SNRPG; the interaction is direct.

Its subcellular location is the nucleus. The protein resides in the gem. The protein localises to the cytoplasm. Its function is as follows. The SMN complex catalyzes the assembly of small nuclear ribonucleoproteins (snRNPs), the building blocks of the spliceosome, and thereby plays an important role in the splicing of cellular pre-mRNAs. Most spliceosomal snRNPs contain a common set of Sm proteins SNRPB, SNRPD1, SNRPD2, SNRPD3, SNRPE, SNRPF and SNRPG that assemble in a heptameric protein ring on the Sm site of the small nuclear RNA to form the core snRNP (Sm core). In the cytosol, the Sm proteins SNRPD1, SNRPD2, SNRPE, SNRPF and SNRPG (5Sm) are trapped in an inactive 6S pICln-Sm complex by the chaperone CLNS1A that controls the assembly of the core snRNP. To assemble core snRNPs, the SMN complex accepts the trapped 5Sm proteins from CLNS1A. Binding of snRNA inside 5Sm ultimately triggers eviction of the SMN complex, thereby allowing binding of SNRPD3 and SNRPB to complete assembly of the core snRNP. Within the SMN complex, GEMIN2 constrains the conformation of 5Sm, thereby promoting 5Sm binding to snRNA containing the snRNP code (a nonameric Sm site and a 3'-adjacent stem-loop), thus preventing progression of assembly until a cognate substrate is bound. This is Gem-associated protein 2 from Mus musculus (Mouse).